A 251-amino-acid polypeptide reads, in one-letter code: Prothoracicostatic peptides (251 aa).

Residues 1-22 (MRKSARGQVCTEAGAGASGDWQ) are disordered. The propeptide occupies 1-77 (MRKSARGQVC…GWQDLNSAWG (77 aa)). At Trp89 the chain carries Tryptophan amide. Residues 93-138 (GWNDMSSAWGKRGWNDMSSAWGKRGWNDMSSAWGKRGWNDMSSAWG) constitute a propeptide that is removed on maturation. Trp152 bears the Tryptophan amide mark. The propeptide occupies 156-187 (AAEPDYEEIDAAIEQLIPIQQLSDNERMEVPE). 2 positions are modified to tryptophan amide: Trp198 and Trp228. The tract at residues 227-251 (MWGKRSAPDADAVDDDHESSARDEA) is disordered.

As to expression, prothoracicostatic peptide 5: Expressed in antennal lobe (AL), corpora cardiaca (CC), corpora allata (CA) and gnathal ganglion (GNG) (at protein level). Expression in AL detected in all animals, in CC, CA and GNG in most (at protein level). Prothoracicostatic peptide 6: Expressed in antennal lobe (AL), corpora cardiaca (CC), corpora allata (CA) and gnathal ganglion (GNG) (at protein level). Expression in AL detected in all animals, expression in GNG in most animals, in CA and CC detected in some animals (at protein level). Prothoracicostatic peptide 7: Expressed in antennal lobe (AL), corpora cardiaca (CC), corpora allata (CA) and gnathal ganglion (GNG) (at protein level). Expression in AL, CA and CC detected in most animals, expression in GNG in some animals (at protein level). Prothoracicostatic peptide precursor-related peptide 2: Expressed in antennal lobe (AL), corpora cardiaca (CC) and corpora allata (CA) with expression detected in few animals (at protein level). Not expressed in gnathal ganglion (GNG) (at protein level). Prothoracicostatic peptide 8: Expressed in antennal lobe (AL), corpora cardiaca (CC), corpora allata (CA) and gnathal ganglion (GNG) (at protein level). Expression in AL detected in all animals, expression in GNG in most animals, in CA and CC detected in some animals (at protein level). Prothoracicostatic peptide precursor-related peptide 3: Expressed in antennal lobe (AL) in few animals (at protein level). Not expressed in corpora cardiaca (CC), corpora allata (CA) and gnathal ganglion (GNG) (at protein level).

Its subcellular location is the secreted. The polypeptide is Prothoracicostatic peptides (Agrotis ipsilon (Black cutworm moth)).